The following is a 266-amino-acid chain: Glutamate racemase (266 aa).

Substrate contacts are provided by residues 9-10 (DS) and 41-42 (YG). Residue C72 is the Proton donor/acceptor of the active site. 73-74 (NT) provides a ligand contact to substrate. C183 acts as the Proton donor/acceptor in catalysis. 184–185 (TH) is a binding site for substrate.

This sequence belongs to the aspartate/glutamate racemases family.

It carries out the reaction L-glutamate = D-glutamate. It functions in the pathway cell wall biogenesis; peptidoglycan biosynthesis. Functionally, provides the (R)-glutamate required for cell wall biosynthesis. This chain is Glutamate racemase, found in Listeria monocytogenes serotype 4a (strain HCC23).